The primary structure comprises 281 residues: CLA biosynthesis isomerase (281 aa).

This sequence belongs to the ADC family.

Its subcellular location is the cytoplasm. It carries out the reaction 10-oxo-(12Z)-octadecenoate = 10-oxo-(11E)-octadecenoate. It functions in the pathway lipid metabolism; fatty acid metabolism. Functionally, is involved in a saturation metabolic pathway of polyunsaturated fatty acids, that detoxifies unsaturated fatty acids and generates hydroxy fatty acids, oxo fatty acids, conjugated fatty acids such as conjugated linoleic acids (CLAs), and partially saturated trans-fatty acids as intermediates. CLA-DC catalyzes the migration of the carbon-carbon double bond in 10-oxo-(12Z)-octadecenoate to produce 10-oxo-(11E)-octadecenoate, during linoleate metabolism. As part of the gut microbiome, this enzyme modifies host fatty acid composition and is expected to improve human health by altering lipid metabolism related to the onset of metabolic syndrome. The chain is CLA biosynthesis isomerase from Lactiplantibacillus plantarum (Lactobacillus plantarum).